We begin with the raw amino-acid sequence, 194 residues long: Fe/S biogenesis protein NfuA (194 aa).

C151 and C154 together coordinate [4Fe-4S] cluster.

The protein belongs to the NfuA family. As to quaternary structure, homodimer. It depends on [4Fe-4S] cluster as a cofactor.

Functionally, involved in iron-sulfur cluster biogenesis. Binds a 4Fe-4S cluster, can transfer this cluster to apoproteins, and thereby intervenes in the maturation of Fe/S proteins. Could also act as a scaffold/chaperone for damaged Fe/S proteins. This chain is Fe/S biogenesis protein NfuA, found in Aliivibrio fischeri (strain ATCC 700601 / ES114) (Vibrio fischeri).